Consider the following 361-residue polypeptide: Prostaglandin E2 receptor EP2 subtype (361 aa).

Residues 1 to 10 (MGSISNNSGS) show a composition bias toward polar residues. Residues 1 to 21 (MGSISNNSGSEDCESREWLPS) are disordered. Topologically, residues 1–23 (MGSISNNSGSEDCESREWLPSGE) are extracellular. The N-linked (GlcNAc...) asparagine glycan is linked to N6. The helical transmembrane segment at 24-47 (SPAISSAMFSAGVLGNLIALALLA) threads the bilayer. Topologically, residues 48 to 65 (RRWRGDAGRRAGRGNSIS) are cytoplasmic. Residues 66 to 91 (LFHVLVTELVFTDLLGTCLISPVVLA) traverse the membrane as a helical segment. Over 92–111 (SYARNQTLMALEPERRACTY) the chain is Extracellular. The N-linked (GlcNAc...) asparagine glycan is linked to N96. A disulfide bridge links C109 with C187. A helical transmembrane segment spans residues 112–132 (FAFAMTFFSLATMLMLFAMAL). The Cytoplasmic portion of the chain corresponds to 133 to 151 (ERYLSIGRPYFYQRHVTRR). A helical transmembrane segment spans residues 152-176 (GGLAVLPTIYTVSLLFCSLPLLGYG). Over 177-198 (QYVQYCPGTWCFIRHGRTAYLQ) the chain is Extracellular. The chain crosses the membrane as a helical span at residues 199-223 (LYATLLLLLIVAVLACNFSVILNLI). Residues 224-262 (RMHRRSGRSRCGPSLGSCRDGSGTRRRGERVSVAEETDH) lie on the Cytoplasmic side of the membrane. The segment at 230 to 253 (GRSRCGPSLGSCRDGSGTRRRGER) is disordered. Residues 263 to 286 (LILLAIMTITFAICSLPFTIFAYM) form a helical membrane-spanning segment. A glycan (N-linked (GlcNAc...) asparagine) is linked at N287. Residues 287 to 299 (NETSSRREKWDLQ) lie on the Extracellular side of the membrane. A helical membrane pass occupies residues 300-323 (ALRFLSINSIIDPWVFAIFRPPVL). The Cytoplasmic segment spans residues 324-361 (RLMRSVLCCRVSLRAQDATQTSCSIQSNASRLTFVDTS).

Belongs to the G-protein coupled receptor 1 family.

It is found in the cell membrane. In terms of biological role, receptor for prostaglandin E2 (PGE2). The activity of this receptor is mediated by G(s) proteins that stimulate adenylate cyclase. The subsequent raise in intracellular cAMP is responsible for the relaxing effect of this receptor on smooth muscle. This chain is Prostaglandin E2 receptor EP2 subtype (PTGER2), found in Canis lupus familiaris (Dog).